We begin with the raw amino-acid sequence, 904 residues long: Protein translocase subunit SecA (904 aa).

ATP-binding positions include Gln87, 105–109 (GEGKT), and Asp512. A disordered region spans residues 851–904 (LAKQQQLSHESDNSALMSQEEANVAASLERKVGRNDPCPCGSGKKYKQCHGRLQ). Residues 853–871 (KQQQLSHESDNSALMSQEE) are compositionally biased toward polar residues. 4 residues coordinate Zn(2+): Cys888, Cys890, Cys899, and His900. The segment covering 894-904 (KKYKQCHGRLQ) has biased composition (basic residues).

It belongs to the SecA family. In terms of assembly, monomer and homodimer. Part of the essential Sec protein translocation apparatus which comprises SecA, SecYEG and auxiliary proteins SecDF-YajC and YidC. Requires Zn(2+) as cofactor.

Its subcellular location is the cell inner membrane. The protein resides in the cytoplasm. The enzyme catalyses ATP + H2O + cellular proteinSide 1 = ADP + phosphate + cellular proteinSide 2.. Part of the Sec protein translocase complex. Interacts with the SecYEG preprotein conducting channel. Has a central role in coupling the hydrolysis of ATP to the transfer of proteins into and across the cell membrane, serving both as a receptor for the preprotein-SecB complex and as an ATP-driven molecular motor driving the stepwise translocation of polypeptide chains across the membrane. The sequence is that of Protein translocase subunit SecA from Yersinia enterocolitica serotype O:8 / biotype 1B (strain NCTC 13174 / 8081).